Here is a 61-residue protein sequence, read N- to C-terminus: Large ribosomal subunit protein bL28 (61 aa).

The interval 1–21 (MAKDYVTGKKTTFGNKRSHAM) is disordered.

Belongs to the bacterial ribosomal protein bL28 family.

The chain is Large ribosomal subunit protein bL28 from Lactobacillus helveticus (strain DPC 4571).